The primary structure comprises 911 residues: Inositol 1,4,5-triphosphate receptor associated 1 (911 aa).

The segment covering M1 to L11 has biased composition (basic and acidic residues). 4 disordered regions span residues M1–V21, E39–L122, L174–L405, and E478–G498. Residues A68–P86 are compositionally biased toward polar residues. Positions H111 to L122 are enriched in basic residues. S118 bears the Phosphoserine mark. The interval S152 to S184 is interaction with PRKG1. The span at S183–V212 shows a compositional bias: polar residues. Residues T277 to F292 are compositionally biased toward basic and acidic residues. S393 is subject to Phosphoserine. Positions N534–T580 are interaction with ITPR1. Positions S547–T645 form a coiled coil. 2 positions are modified to phosphoserine: S683 and S696. Disordered stretches follow at residues L706–C766 and Y787–R829. Residues L708–S728 are compositionally biased toward low complexity. The span at G790–R801 shows a compositional bias: basic and acidic residues. The span at E802–E825 shows a compositional bias: acidic residues. The chain crosses the membrane as a helical span at residues V853–S873.

Interacts with PRKG1/cGKI-beta and ITPR1/IP3R type I. Part of cGMP kinase signaling complex at least composed of ACTA2/alpha-actin, CNN1/calponin H1, PLN/phospholamban, PRKG1 and ITPR1. Interacts with HCN4; regulates HCN4 channel activity. In terms of processing, phosphorylated by PRKG1/cGKI-beta. Phosphorylation at Ser-696 is necessary for PRKG1-induced calcium release in the cytosol. In terms of tissue distribution, highly expressed in trachea, aorta and uterus.

It is found in the sarcoplasmic reticulum. Its subcellular location is the cytoplasm. The protein resides in the perinuclear region. It localises to the membrane. Plays a role as NO/PRKG1-dependent regulator of IP3-induced calcium release; its phosphorylation by PRKG1 inhibits bradykinin and IP3-induced calcium release from intracellular stores. Recruits PRKG1 to the endoplasmic reticulum and may mediate the assembly of PRKG1 and ITPR1 in a macrocomplex. Involved in PRKG1 signaling cascade leading to inhibition of platelet activation and aggregation. Also mediates NO-dependent inhibition of calcium signaling in gastrointestinal smooth muscle contributing to NO-dependent relaxation. Plays a role in the regulation of cellular excitability by regulating the hyperpolarization-activated cyclic nucleotide-gated HCN4 channel activity. The sequence is that of Inositol 1,4,5-triphosphate receptor associated 1 (IRAG1) from Bos taurus (Bovine).